We begin with the raw amino-acid sequence, 986 residues long: Ephrin type-A receptor 4 (986 aa).

A signal peptide spans 1–19 (MAGIFYFILFSFLFGICDA). The Extracellular segment spans residues 20–547 (VTGSRVYPAN…RIIGDGANST (528 aa)). In terms of domain architecture, Eph LBD spans 30-209 (EVTLLDSRSV…FYKKCPLTVR (180 aa)). 3 N-linked (GlcNAc...) asparagine glycosylation sites follow: Asn-235, Asn-340, and Asn-408. Fibronectin type-III domains follow at residues 328–439 (PPSA…TNQA) and 440–537 (APSS…TVPS). A helical membrane pass occupies residues 548 to 569 (VLLVSVSGSVVLVVILIAAFVI). Over 570–986 (SRRRSKYSKA…QQMHGRMVPV (417 aa)) the chain is Cytoplasmic. 2 positions are modified to phosphotyrosine; by autocatalysis: Tyr-596 and Tyr-602. Positions 621–882 (IKIEKVIGVG…QIVNMLDKLI (262 aa)) constitute a Protein kinase domain. ATP-binding positions include 627-635 (IGVGEFGEV) and Lys-653. Residue Asp-746 is the Proton acceptor of the active site. Phosphotyrosine; by autocatalysis occurs at positions 779 and 928. An SAM domain is found at 911-975 (SAVVSVGDWL…LSSVQAMRTQ (65 aa)). The PDZ-binding signature appears at 984-986 (VPV).

Belongs to the protein kinase superfamily. Tyr protein kinase family. Ephrin receptor subfamily. Heterotetramer upon binding of the ligand. The heterotetramer is composed of an ephrin dimer and a receptor dimer. Oligomerization is probably required to induce biological responses. Interacts (phosphorylated at position Tyr-602) with FYN. Interacts (via PDZ motif) with SIPA1L1 (via PDZ domain); controls neuronal morphology through regulation of the RAP1 (RAP1A or RAP1B) and RAP2 (RAP2A, RAP2B or RAP2C) GTPases. Interacts with CDK5, CDK5R1 and NGEF; upon activation by EFNA1 induces NGEF phosphorylation by the kinase CDK5. Interacts with CHN1; effector of EPHA4 in axon guidance linking EPHA4 activation to RAC1 regulation. Forms a ternary complex composed of ADAM10, CADH1 and EPHA4; within the complex, CADH1 is cleaved by ADAM10 which disrupts adherens junctions. As to expression, expressed in inner and outer pillar cells of the organ of Corti (at protein level). Highest expression in the adult brain and retina and also detectable in kidney, lung, skeletal muscle and thymus. Not detected in heart and liver. Expressed in myogenic progenitor cells.

It is found in the cell membrane. The protein resides in the cell projection. It localises to the axon. The protein localises to the dendrite. Its subcellular location is the postsynaptic density membrane. It is found in the early endosome. The protein resides in the cell junction. It localises to the adherens junction. It catalyses the reaction L-tyrosyl-[protein] + ATP = O-phospho-L-tyrosyl-[protein] + ADP + H(+). In terms of biological role, receptor tyrosine kinase which binds membrane-bound ephrin family ligands residing on adjacent cells, leading to contact-dependent bidirectional signaling into neighboring cells. The signaling pathway downstream of the receptor is referred to as forward signaling while the signaling pathway downstream of the ephrin ligand is referred to as reverse signaling. Highly promiscuous, it has the unique property among Eph receptors to bind and to be physiologically activated by both GPI-anchored ephrin-A and transmembrane ephrin-B ligands including EFNA1 and EFNB3. Upon activation by ephrin ligands, modulates cell morphology and integrin-dependent cell adhesion through regulation of the Rac, Rap and Rho GTPases activity. Plays an important role in the development of the nervous system controlling different steps of axonal guidance including the establishment of the corticospinal projections. May also control the segregation of motor and sensory axons during neuromuscular circuit developmen. In addition to its role in axonal guidance plays a role in synaptic plasticity. Activated by EFNA1 phosphorylates CDK5 at 'Tyr-15' which in turn phosphorylates NGEF regulating RHOA and dendritic spine morphogenesis. In the nervous system, also plays a role in repair after injury preventing axonal regeneration and in angiogenesis playing a role in central nervous system vascular formation. Additionally, its promiscuity makes it available to participate in a variety of cell-cell signaling regulating for instance the development of the thymic epithelium. During development of the cochlear organ of Corti, regulates pillar cell separation by forming a ternary complex with ADAM10 and CADH1 which facilitates the cleavage of CADH1 by ADAM10 and disruption of adherens junctions. Phosphorylates CAPRIN1, promoting CAPRIN1-dependent formation of a membraneless compartment. The polypeptide is Ephrin type-A receptor 4 (Epha4) (Mus musculus (Mouse)).